The primary structure comprises 852 residues: Glutamine--tRNA ligase (852 aa).

Residues 1 to 42 form a disordered region; the sequence is MGAFGWEQDRGAPFSGRSPRILTRMTDAPRPTAGADAPARPP. The tract at residues 1-635 is glutaminyl-tRNA synthetase; the sequence is MGAFGWEQDR…ITLKDTWGKQ (635 aa). The segment covering 28-38 has biased composition (low complexity); the sequence is APRPTAGADAP. The 'HIGH' region motif lies at 74–84; that stretch reads PDPSGYAHLGH. Positions 107 and 252 each coordinate L-glutamine. Positions 308–312 match the 'KMSKS' region motif; sequence ITSKR. Disordered stretches follow at residues 533–562 and 632–681; these read EGENADVEDDSAGPAEHEAEPGAGQETAPV and WGKQ…LTPE. The interval 636–852 is gatB-like; that stretch reads GGGTQQKAEG…LAAALKDALA (217 aa). Residues 664–675 are compositionally biased toward low complexity; that stretch reads SSSPAKAHAPKA.

It in the N-terminal section; belongs to the class-I aminoacyl-tRNA synthetase family. In the C-terminal section; belongs to the GatB/GatE family. Monomer.

The protein resides in the cytoplasm. The catalysed reaction is tRNA(Gln) + L-glutamine + ATP = L-glutaminyl-tRNA(Gln) + AMP + diphosphate. This chain is Glutamine--tRNA ligase, found in Deinococcus radiodurans (strain ATCC 13939 / DSM 20539 / JCM 16871 / CCUG 27074 / LMG 4051 / NBRC 15346 / NCIMB 9279 / VKM B-1422 / R1).